Reading from the N-terminus, the 374-residue chain is Queuine tRNA-ribosyltransferase (374 aa).

Asp-89 serves as the catalytic Proton acceptor. Residues 89–93 (DSGGF), Asp-143, Gln-187, and Gly-214 each bind substrate. An RNA binding region spans residues 245-251 (GVGKPED). Asp-264 acts as the Nucleophile in catalysis. The tract at residues 269 to 273 (TRNAR) is RNA binding; important for wobble base 34 recognition. 4 residues coordinate Zn(2+): Cys-302, Cys-304, Cys-307, and His-333.

The protein belongs to the queuine tRNA-ribosyltransferase family. Homodimer. Within each dimer, one monomer is responsible for RNA recognition and catalysis, while the other monomer binds to the replacement base PreQ1. It depends on Zn(2+) as a cofactor.

The enzyme catalyses 7-aminomethyl-7-carbaguanine + guanosine(34) in tRNA = 7-aminomethyl-7-carbaguanosine(34) in tRNA + guanine. Its pathway is tRNA modification; tRNA-queuosine biosynthesis. Functionally, catalyzes the base-exchange of a guanine (G) residue with the queuine precursor 7-aminomethyl-7-deazaguanine (PreQ1) at position 34 (anticodon wobble position) in tRNAs with GU(N) anticodons (tRNA-Asp, -Asn, -His and -Tyr). Catalysis occurs through a double-displacement mechanism. The nucleophile active site attacks the C1' of nucleotide 34 to detach the guanine base from the RNA, forming a covalent enzyme-RNA intermediate. The proton acceptor active site deprotonates the incoming PreQ1, allowing a nucleophilic attack on the C1' of the ribose to form the product. After dissociation, two additional enzymatic reactions on the tRNA convert PreQ1 to queuine (Q), resulting in the hypermodified nucleoside queuosine (7-(((4,5-cis-dihydroxy-2-cyclopenten-1-yl)amino)methyl)-7-deazaguanosine). This chain is Queuine tRNA-ribosyltransferase, found in Shewanella baltica (strain OS185).